A 446-amino-acid polypeptide reads, in one-letter code: Asparagine--tRNA ligase (446 aa).

The protein belongs to the class-II aminoacyl-tRNA synthetase family. Homodimer.

Its subcellular location is the cytoplasm. It catalyses the reaction tRNA(Asn) + L-asparagine + ATP = L-asparaginyl-tRNA(Asn) + AMP + diphosphate + H(+). This Sorangium cellulosum (strain So ce56) (Polyangium cellulosum (strain So ce56)) protein is Asparagine--tRNA ligase.